Reading from the N-terminus, the 357-residue chain is Malonyl CoA reductase (NADP) (357 aa).

13 to 16 (TGLV) contributes to the NADP(+) binding site. Cys-150 (acyl-thioester intermediate) is an active-site residue. 180–181 (SG) provides a ligand contact to NADP(+). The active-site Proton acceptor is the His-245. An NADP(+)-binding site is contributed by 332–333 (NT).

Belongs to the aspartate-semialdehyde dehydrogenase family. Homotetramer.

The enzyme catalyses 3-oxopropanoate + NADP(+) + CoA = malonyl-CoA + NADPH + H(+). In terms of biological role, catalyzes the reduction of malonyl-CoA to malonate semialdehyde, a key step in the 3-hydroxypropanoate and the 3-hydroxypropanoate/4-hydroxybutyrate cycles. The sequence is that of Malonyl CoA reductase (NADP) from Metallosphaera sedula (strain ATCC 51363 / DSM 5348 / JCM 9185 / NBRC 15509 / TH2).